The following is a 500-amino-acid chain: GTPase Der (500 aa).

EngA-type G domains are found at residues 3–166 (PVVA…MEEL) and 211–384 (IKLA…VSAT). GTP-binding positions include 9-16 (GRPNVGKS), 56-60 (DTGGI), 118-121 (NKID), 217-224 (GRPNVGKS), 264-268 (DTAGV), and 329-332 (NKWD). The KH-like domain occupies 385–469 (KRVGTSVLTR…PIRIQFQNSE (85 aa)). The segment at 468 to 500 (SENPFEDRGGKLTMSQERQRKRLLGAVKNRNKK) is disordered. Residues 486–500 (QRKRLLGAVKNRNKK) are compositionally biased toward basic residues.

Belongs to the TRAFAC class TrmE-Era-EngA-EngB-Septin-like GTPase superfamily. EngA (Der) GTPase family. In terms of assembly, associates with the 50S ribosomal subunit.

In terms of biological role, GTPase that plays an essential role in the late steps of ribosome biogenesis. The protein is GTPase Der of Aliivibrio fischeri (strain ATCC 700601 / ES114) (Vibrio fischeri).